Consider the following 660-residue polypeptide: Leucine-rich repeat transmembrane protein FLRT2 (660 aa).

The N-terminal stretch at 1-35 (MGLQTTKWPGRGAFILKFWLIISLGLYLQVSKLLA) is a signal peptide. Intrachain disulfides connect Cys-36-Cys-42 and Cys-40-Cys-49. One can recognise an LRRNT domain in the interval 36-63 (CPSVCRCDRNFVYCNERSLTSVPLGIPE). Over 36 to 540 (CPSVCRCDRN…QTTSHSMGSP (505 aa)) the chain is Extracellular. LRR repeat units follow at residues 62 to 87 (PEGVTVLYLHNNQINNAGFPAELHNV), 88 to 108 (QSVHTVYLYGNQLDEFPMNLP), 109 to 131 (KNVRVLHLQENNIQTISRAALAQ), 132 to 157 (LLKLEELHLDDNSISTVGVEDGAFRE), 159 to 181 (ISLKLLFLSKNHLSSVPVGLPVD), 183 to 202 (QELRVDENRIAVISDMAFQN), 203 to 228 (LTSLERLIVDGNLLTNKGIAEGTFSH), 229 to 251 (LTKLKEFSIVRNSLSHPPPDLPG), 252 to 274 (THLIRLYLQDNQINHIPLTAFAN), and 275 to 298 (LRKLERLDISNNQLRMLTQGVFDH). A glycan (N-linked (GlcNAc...) asparagine) is linked at Asn-202. Residues 310–362 (NPWFCDCSIKWVTEWLKYIPSSLNVRGFMCQGPEQVRGMAVRELNMNLLSCPT) form the LRRCT domain. Cystine bridges form between Cys-314-Cys-339 and Cys-316-Cys-360. Residues 371–396 (TPAPSTVSPTTQSPTLSVPSPSRGSV) are compositionally biased toward low complexity. Residues 371–413 (TPAPSTVSPTTQSPTLSVPSPSRGSVPPAPTPSKLPTIPDWDG) are disordered. The 99-residue stretch at 419-517 (PPISERIQLS…ICSEATTHAS (99 aa)) folds into the Fibronectin type-III domain. A helical membrane pass occupies residues 541–561 (FLLAGLIGGAVIFVLVVLLSV). Residues 562–660 (FCWHMHKKGR…SVPDLEHCHT (99 aa)) lie on the Cytoplasmic side of the membrane.

Self-associates (via leucine-rich repeats), giving rise to homooligomers. Interacts with FGFR1. Interacts with FGFR2. Interacts (via extracellular domain) with ADGRL1/LPHN1. Interacts (via extracellular domain) with ADGRL3 (via olfactomedin-like domain). Interacts (via extracellular domain) with UNC5D (via the first Ig-like domain). Can also interact (via extracellular domain) with UNC5B, but with much lower affinity. Interacts (via extracellular domain) with FN1. In terms of processing, N-glycosylated. Post-translationally, proteolytic cleavage in the juxtamembrane region gives rise to a soluble ectodomain. Cleavage is probably effected by a metalloprotease. Detected in adult brain (at protein level).

The protein localises to the cell membrane. The protein resides in the endoplasmic reticulum membrane. It localises to the cell junction. Its subcellular location is the focal adhesion. It is found in the secreted. The protein localises to the extracellular space. The protein resides in the extracellular matrix. It localises to the synapse. Its subcellular location is the synaptosome. It is found in the microsome membrane. Functions in cell-cell adhesion, cell migration and axon guidance. Mediates cell-cell adhesion via its interactions with ADGRL3 and probably also other latrophilins that are expressed at the surface of adjacent cells. May play a role in the migration of cortical neurons during brain development via its interaction with UNC5D. Mediates axon growth cone collapse and plays a repulsive role in neuron guidance via its interaction with UNC5D, and possibly also other UNC-5 family members. Plays a role in fibroblast growth factor-mediated signaling cascades. Required for normal organization of the cardiac basement membrane during embryogenesis, and for normal embryonic epicardium and heart morphogenesis. The protein is Leucine-rich repeat transmembrane protein FLRT2 of Mus musculus (Mouse).